The primary structure comprises 230 residues: Metaxin-2 homolog (230 aa).

It belongs to the metaxin family. Associates with the mitochondrial contact site and cristae organizing system (MICOS) complex (also known as MINOS or MitOS complex).

It localises to the mitochondrion outer membrane. Its function is as follows. Involved in transport of proteins into the mitochondrion. This is Metaxin-2 homolog (mtx-2) from Caenorhabditis elegans.